A 469-amino-acid chain; its full sequence is Zinc finger CCCH domain-containing protein 30 (469 aa).

Residues 415 to 443 (VRPMKPCAYFNSPKGCRNGASCTFLHDAS) form a C3H1-type zinc finger. Residues 444–469 (APTRKDHQKQKGSKRIKLDNTMGGRN) are disordered. Positions 449 to 458 (DHQKQKGSKR) are enriched in basic residues.

This Oryza sativa subsp. japonica (Rice) protein is Zinc finger CCCH domain-containing protein 30.